The following is a 270-amino-acid chain: Inositol monophosphatase (270 aa).

Positions 71, 91, 93, and 94 each coordinate Mg(2+). Glu71 lines the substrate pocket. Substrate is bound by residues 93–96 (LDGT), 194–196 (GSC), Glu213, and Asp221. Asp221 is a binding site for Mg(2+).

This sequence belongs to the inositol monophosphatase superfamily. Mg(2+) is required as a cofactor.

The catalysed reaction is a myo-inositol phosphate + H2O = myo-inositol + phosphate. It functions in the pathway polyol metabolism; myo-inositol biosynthesis; myo-inositol from D-glucose 6-phosphate: step 2/2. Inhibited by Li(+). Responsible for the provision of inositol required for synthesis of phosphatidylinositol and polyphosphoinositides. The polypeptide is Inositol monophosphatase (IMP1) (Mesembryanthemum crystallinum (Common ice plant)).